Consider the following 386-residue polypeptide: Bifunctional enzyme IspD/IspF (386 aa).

The tract at residues 1–229 is 2-C-methyl-D-erythritol 4-phosphate cytidylyltransferase; it reads MIRGERVIGI…RARALLEAPV (229 aa). The segment at 230–386 is 2-C-methyl-D-erythritol 2,4-cyclodiphosphate synthase; it reads ATGVGYDTHR…AIALLVRAAG (157 aa). A divalent metal cation contacts are provided by Asp236 and His238. Residues 236 to 238 and 261 to 262 contribute to the 4-CDP-2-C-methyl-D-erythritol 2-phosphate site; these read DTH and HS. Residue His269 participates in a divalent metal cation binding. Residues 283–285, 288–292, 359–362, Phe366, and Arg369 contribute to the 4-CDP-2-C-methyl-D-erythritol 2-phosphate site; these read DLG, FPDTD, and TTGE.

The protein in the N-terminal section; belongs to the IspD/TarI cytidylyltransferase family. IspD subfamily. It in the C-terminal section; belongs to the IspF family. The cofactor is a divalent metal cation.

It carries out the reaction 2-C-methyl-D-erythritol 4-phosphate + CTP + H(+) = 4-CDP-2-C-methyl-D-erythritol + diphosphate. The catalysed reaction is 4-CDP-2-C-methyl-D-erythritol 2-phosphate = 2-C-methyl-D-erythritol 2,4-cyclic diphosphate + CMP. It functions in the pathway isoprenoid biosynthesis; isopentenyl diphosphate biosynthesis via DXP pathway; isopentenyl diphosphate from 1-deoxy-D-xylulose 5-phosphate: step 2/6. The protein operates within isoprenoid biosynthesis; isopentenyl diphosphate biosynthesis via DXP pathway; isopentenyl diphosphate from 1-deoxy-D-xylulose 5-phosphate: step 4/6. Bifunctional enzyme that catalyzes the formation of 4-diphosphocytidyl-2-C-methyl-D-erythritol from CTP and 2-C-methyl-D-erythritol 4-phosphate (MEP) (IspD), and catalyzes the conversion of 4-diphosphocytidyl-2-C-methyl-D-erythritol 2-phosphate (CDP-ME2P) to 2-C-methyl-D-erythritol 2,4-cyclodiphosphate (ME-CPP) with a corresponding release of cytidine 5-monophosphate (CMP) (IspF). The polypeptide is Bifunctional enzyme IspD/IspF (Anaeromyxobacter dehalogenans (strain 2CP-C)).